The primary structure comprises 201 residues: Large ribosomal subunit protein uL4 (201 aa).

Residues 46-71 are disordered; that stretch reads QKTRAEVIGSGKKPWRQKGTGRARAG.

The protein belongs to the universal ribosomal protein uL4 family. Part of the 50S ribosomal subunit.

One of the primary rRNA binding proteins, this protein initially binds near the 5'-end of the 23S rRNA. It is important during the early stages of 50S assembly. It makes multiple contacts with different domains of the 23S rRNA in the assembled 50S subunit and ribosome. Its function is as follows. Forms part of the polypeptide exit tunnel. The sequence is that of Large ribosomal subunit protein uL4 from Shewanella sediminis (strain HAW-EB3).